A 42-amino-acid polypeptide reads, in one-letter code: Delta-actitoxin-Ael2d (42 aa).

Intrachain disulfides connect Cys4/Cys37, Cys6/Cys30, and Cys20/Cys38.

This sequence belongs to the sea anemone type 3 (BDS) potassium channel toxin family.

The protein resides in the secreted. Its subcellular location is the nematocyst. Its function is as follows. Binds to voltage-gated sodium channels (Nav), and slows down the inactivation of mammalian Nav1.2/SCN2A, Nav1.3/SCN3A Nav1.4/SCN4A, Nav1.6/SCN8A, insect DmNav1 and BgNav1 channels, and arachnid VdNav1 channel. This toxin acts by binding to site 3 of sodium channels. The sequence is that of Delta-actitoxin-Ael2d from Anthopleura elegantissima (Green aggregating anemone).